Consider the following 672-residue polypeptide: Serine/threonine-protein kinase ppk16 (672 aa).

The 249-residue stretch at 31-279 (YRIESVVGEG…IDQIISHPYF (249 aa)) folds into the Protein kinase domain. Residues 37 to 45 (VGEGSFGKV) and K60 each bind ATP. Catalysis depends on D148, which acts as the Proton acceptor. Residue S231 is modified to Phosphoserine. Positions 375–384 (VSVMSNNQDS) are enriched in polar residues. Disordered stretches follow at residues 375 to 396 (VSVM…DSSN), 416 to 436 (DTLS…ENYL), 464 to 572 (NSFG…YSNV), and 632 to 672 (SGRK…TDLL). The segment covering 472–487 (NLPQTTHVDTGEQNTP) has biased composition (polar residues). Residues 508 to 523 (SNSQNSPSKSSNLSIN) are compositionally biased toward low complexity. The segment covering 531–541 (LQNTVISPQPT) has biased composition (polar residues). Low complexity-rich tracts occupy residues 549–572 (RSLS…YSNV) and 639–649 (SSSSLMFNQSS).

It belongs to the protein kinase superfamily. Ser/Thr protein kinase family.

Its subcellular location is the cytoplasm. It carries out the reaction L-seryl-[protein] + ATP = O-phospho-L-seryl-[protein] + ADP + H(+). The enzyme catalyses L-threonyl-[protein] + ATP = O-phospho-L-threonyl-[protein] + ADP + H(+). Has a role in meiosis. The protein is Serine/threonine-protein kinase ppk16 (ppk16) of Schizosaccharomyces pombe (strain 972 / ATCC 24843) (Fission yeast).